Consider the following 115-residue polypeptide: Virulence-associated protein A' (115 aa).

The 55-residue stretch at 16–70 folds into the HTH cro/C1-type domain; sequence IKSDLDGLGINITEAAKALDVTRAALSEIINGKRGISAKMAWKLSKAFTNSDPEF. The H-T-H motif DNA-binding region spans 27-46; that stretch reads ITEAAKALDVTRAALSEIIN.

Belongs to the VapA/VapI family.

The chain is Virulence-associated protein A' (vapA') from Dichelobacter nodosus (Bacteroides nodosus).